The primary structure comprises 284 residues: Adenylate kinase 1, chloroplastic (284 aa).

The transit peptide at 1–36 directs the protein to the chloroplast; it reads MARLVRVARSSSLFGFGNRFYSTSAEASHASSPSPF. An ATP-binding site is contributed by 61–66; that stretch reads GVGKGT. The tract at residues 81–110 is NMP; the sequence is ATGDLVREELASSGPLSQKLSEIVNQGKLV. AMP is bound by residues threonine 82, arginine 87, 108–110, 138–141, and glutamine 145; these read KLV and GFPR. The interval 174-222 is LID; it reads GRRTCSQCGKGFNVAHINLKGENGRPGISMDPLLPPHQCMSKLVTRADD. Arginine 175 serves as a coordination point for ATP. Residues arginine 219 and arginine 230 each coordinate AMP. Residue glycine 258 coordinates ATP.

It belongs to the adenylate kinase family. As to quaternary structure, monomer. As to expression, highly expressed in flowers and at lower levels in roots, leaves and stems.

The protein localises to the plastid. Its subcellular location is the chloroplast stroma. It carries out the reaction AMP + ATP = 2 ADP. Its function is as follows. Catalyzes the reversible transfer of the terminal phosphate group between ATP and AMP. Plays an important role in cellular energy homeostasis, adenine nucleotide metabolism and plant growth. The sequence is that of Adenylate kinase 1, chloroplastic (ADK) from Arabidopsis thaliana (Mouse-ear cress).